The primary structure comprises 156 residues: Transcription elongation factor GreA (156 aa).

Positions 46-73 form a coiled coil; it reads AEYHAAREKQSFIEGRIKELEALLSLAE.

Belongs to the GreA/GreB family.

In terms of biological role, necessary for efficient RNA polymerase transcription elongation past template-encoded arresting sites. The arresting sites in DNA have the property of trapping a certain fraction of elongating RNA polymerases that pass through, resulting in locked ternary complexes. Cleavage of the nascent transcript by cleavage factors such as GreA or GreB allows the resumption of elongation from the new 3'terminus. GreA releases sequences of 2 to 3 nucleotides. The protein is Transcription elongation factor GreA of Cereibacter sphaeroides (strain ATCC 17025 / ATH 2.4.3) (Rhodobacter sphaeroides).